A 420-amino-acid chain; its full sequence is Gamma-glutamyl phosphate reductase (420 aa).

Belongs to the gamma-glutamyl phosphate reductase family.

Its subcellular location is the cytoplasm. It carries out the reaction L-glutamate 5-semialdehyde + phosphate + NADP(+) = L-glutamyl 5-phosphate + NADPH + H(+). It participates in amino-acid biosynthesis; L-proline biosynthesis; L-glutamate 5-semialdehyde from L-glutamate: step 2/2. Functionally, catalyzes the NADPH-dependent reduction of L-glutamate 5-phosphate into L-glutamate 5-semialdehyde and phosphate. The product spontaneously undergoes cyclization to form 1-pyrroline-5-carboxylate. The chain is Gamma-glutamyl phosphate reductase from Streptococcus pneumoniae (strain 70585).